We begin with the raw amino-acid sequence, 602 residues long: Elongation factor 4 (602 aa).

Positions 6-188 (DHIRNFSIVA…AIVTQLPAPK (183 aa)) constitute a tr-type G domain. GTP is bound by residues 18–23 (DHGKST) and 135–138 (NKID).

This sequence belongs to the TRAFAC class translation factor GTPase superfamily. Classic translation factor GTPase family. LepA subfamily.

The protein localises to the cell inner membrane. The enzyme catalyses GTP + H2O = GDP + phosphate + H(+). In terms of biological role, required for accurate and efficient protein synthesis under certain stress conditions. May act as a fidelity factor of the translation reaction, by catalyzing a one-codon backward translocation of tRNAs on improperly translocated ribosomes. Back-translocation proceeds from a post-translocation (POST) complex to a pre-translocation (PRE) complex, thus giving elongation factor G a second chance to translocate the tRNAs correctly. Binds to ribosomes in a GTP-dependent manner. The polypeptide is Elongation factor 4 (Brucella anthropi (strain ATCC 49188 / DSM 6882 / CCUG 24695 / JCM 21032 / LMG 3331 / NBRC 15819 / NCTC 12168 / Alc 37) (Ochrobactrum anthropi)).